The sequence spans 118 residues: Group 1 truncated hemoglobin GlbN (118 aa).

His70 provides a ligand contact to heme.

It belongs to the truncated hemoglobin family. Group I subfamily. Monomer. Requires heme as cofactor.

The protein resides in the membrane. This is Group 1 truncated hemoglobin GlbN (glbN) from Nostoc commune.